The primary structure comprises 554 residues: Oxygen-dependent choline dehydrogenase (554 aa).

4–33 (DYIIIGAGSAGNVLATRLTEDPNTTVLLLE) is a binding site for FAD. His-473 functions as the Proton acceptor in the catalytic mechanism.

The protein belongs to the GMC oxidoreductase family. FAD serves as cofactor.

It catalyses the reaction choline + A = betaine aldehyde + AH2. The enzyme catalyses betaine aldehyde + NAD(+) + H2O = glycine betaine + NADH + 2 H(+). It participates in amine and polyamine biosynthesis; betaine biosynthesis via choline pathway; betaine aldehyde from choline (cytochrome c reductase route): step 1/1. In terms of biological role, involved in the biosynthesis of the osmoprotectant glycine betaine. Catalyzes the oxidation of choline to betaine aldehyde and betaine aldehyde to glycine betaine at the same rate. This chain is Oxygen-dependent choline dehydrogenase, found in Klebsiella pneumoniae (strain 342).